A 252-amino-acid chain; its full sequence is Geranylgeranylglyceryl phosphate synthase (252 aa).

Mg(2+) is bound by residues D27 and T57. Sn-glycerol 1-phosphate-binding positions include 175-181 (YLEAGSG), 206-207 (GG), and 228-229 (GN).

The protein belongs to the GGGP/HepGP synthase family. Group II subfamily. The cofactor is Mg(2+).

The protein resides in the cytoplasm. The catalysed reaction is sn-glycerol 1-phosphate + (2E,6E,10E)-geranylgeranyl diphosphate = sn-3-O-(geranylgeranyl)glycerol 1-phosphate + diphosphate. It functions in the pathway membrane lipid metabolism; glycerophospholipid metabolism. Prenyltransferase that catalyzes the transfer of the geranylgeranyl moiety of geranylgeranyl diphosphate (GGPP) to the C3 hydroxyl of sn-glycerol-1-phosphate (G1P). This reaction is the first ether-bond-formation step in the biosynthesis of archaeal membrane lipids. This is Geranylgeranylglyceryl phosphate synthase from Metallosphaera sedula (strain ATCC 51363 / DSM 5348 / JCM 9185 / NBRC 15509 / TH2).